The following is a 509-amino-acid chain: MDIRAAEISAILKEQIKNFGKEAEVSEVGQVLSVGDGIARVYGLDNVQAGEMVEFPGGIRGMALNLESDNVGVVIFGADRDIKEGDVVKRTGAIVDVPVGPELLGRVVDALGNPIDGKGPIKAKERRRVDVKAPGIIPRKSVHEPMSTGLKAIDALIPVGRGQRELVIGDRQTGKTAIILDTFLNQKPIHDNGPDKDKLYCVYVAVGQKRSTVAQFVKVLEERGALEYSIVVAATASDPAPMQYLAPFAGCAMGEYFRDNGQHALIGYDDLSKQAVAYRQMSLLLRRPPGREAYPGDVFYLHSRLLERAAKLNDENGAGSLTALPVIETQGNDVSAFIPTNVISITDGQIFLETNLFYQGIRPAVNVGLSVSRVGSSAQIKAMKQVAGSIKGELAQYREMAAFAQFGSDLDAATQRLLNRGARLTELLKQPQFSPLKTEEQVAVIYAGVNGYLDKLAVNQVGKFEEGLLASLRTEHKDVLEGIRNEKALTDDLKAKLKAAIDAFAKSFA.

169-176 (GDRQTGKT) serves as a coordination point for ATP.

The protein belongs to the ATPase alpha/beta chains family. As to quaternary structure, F-type ATPases have 2 components, CF(1) - the catalytic core - and CF(0) - the membrane proton channel. CF(1) has five subunits: alpha(3), beta(3), gamma(1), delta(1), epsilon(1). CF(0) has three main subunits: a(1), b(2) and c(9-12). The alpha and beta chains form an alternating ring which encloses part of the gamma chain. CF(1) is attached to CF(0) by a central stalk formed by the gamma and epsilon chains, while a peripheral stalk is formed by the delta and b chains.

The protein localises to the cell inner membrane. The enzyme catalyses ATP + H2O + 4 H(+)(in) = ADP + phosphate + 5 H(+)(out). Functionally, produces ATP from ADP in the presence of a proton gradient across the membrane. The alpha chain is a regulatory subunit. This chain is ATP synthase subunit alpha, found in Brucella canis (strain ATCC 23365 / NCTC 10854 / RM-666).